The following is a 475-amino-acid chain: Early growth response protein 1-B (475 aa).

Disordered stretches follow at residues 109-180 (NVSS…TASI) and 264-285 (PSRMRKYPNRPSKTPPHERPYA). Residues 111–140 (SSSSAPSSSPSSSSSSSSSSSSQSPPLSCS) are compositionally biased toward low complexity. Positions 170-179 (QPFQNASTAS) are enriched in polar residues. C2H2-type zinc fingers lie at residues 284-308 (YACPVESCDRRFSRSDELTRHIRIH), 314-336 (FQCRICMRNFSRSDHLTTHIRTH), and 342-364 (FACDICGRKFARSDERKRHTKIH). The tract at residues 355–379 (DERKRHTKIHLRQKDKKADKATPVS) is disordered. The segment covering 359–369 (RHTKIHLRQKD) has biased composition (basic residues).

It belongs to the EGR C2H2-type zinc-finger protein family.

The protein resides in the nucleus. Its subcellular location is the cytoplasm. Functionally, transcriptional regulator. Recognizes and binds to the DNA sequence 5'-GCG(T/G)GGGCG-3'(EGR-site) in the promoter region of target genes. Binds double-stranded target DNA, irrespective of the cytosine methylation status. Regulates the transcription of numerous target genes, and thereby plays an important role in regulating the response to growth factors, DNA damage, and ischemia. Plays a role in the regulation of cell survival, proliferation and cell death. Mediates responses to ischemia and hypoxia; regulates the expression of proteins that are involved in inflammatory processes. Plays a role in regulating the expression of circadian clock genes. The polypeptide is Early growth response protein 1-B (egr1-b) (Xenopus laevis (African clawed frog)).